A 384-amino-acid chain; its full sequence is Glutamate 5-kinase (384 aa).

Lys24 provides a ligand contact to ATP. Residues Ser64, Asp149, and Asn161 each coordinate substrate. ATP is bound by residues 181 to 182 (TD) and 223 to 229 (TGGMRTK). Residues 288–370 (PGAILIDAGA…RDIQTLLGYT (83 aa)) enclose the PUA domain.

Belongs to the glutamate 5-kinase family.

It localises to the cytoplasm. The enzyme catalyses L-glutamate + ATP = L-glutamyl 5-phosphate + ADP. It participates in amino-acid biosynthesis; L-proline biosynthesis; L-glutamate 5-semialdehyde from L-glutamate: step 1/2. In terms of biological role, catalyzes the transfer of a phosphate group to glutamate to form L-glutamate 5-phosphate. This Xylella fastidiosa (strain M12) protein is Glutamate 5-kinase.